We begin with the raw amino-acid sequence, 86 residues long: Muscarinic toxin 7 (86 aa).

An N-terminal signal peptide occupies residues 1–21 (MKTLLLTLVVVTIVCLDLGYT). 3 finger loop regions span residues 23–37 (TCVKSNSIWFPTSED), 44–63 (LCFKRWQYISPRMYDFTRGC), and 66–78 (TCPKAEYRDVINC). 4 disulfide bridges follow: C24–C45, C38–C63, C67–C78, and C79–C84.

Belongs to the three-finger toxin family. Short-chain subfamily. Aminergic toxin sub-subfamily. As to expression, expressed by the venom gland.

It localises to the secreted. Binds specifically and irreversibly to an allosteric site of the muscarinic acetylcholine M1 receptor (CHRM1) at subnanomolar concentrations and shows a very slow dissociation rate. It also inhibits agonist-mediated guanosine 5'-O-(3'-thiotriphosphate) (GTP-g-S) binding and downstream signaling, and decreases the dissociation rate of orthosteric antagonists (N-methylscopolamine (NMS) or pirenzepine). Is a potent negative allosteric modulator (NAM) for CHRM1 activation and a positive allosteric modulator (PAM) for antagonist binding. This is Muscarinic toxin 7 from Dendroaspis angusticeps (Eastern green mamba).